Consider the following 554-residue polypeptide: Arginine--tRNA ligase (554 aa).

The short motif at 129–139 (ANPTGPLHIGH) is the 'HIGH' region element.

It belongs to the class-I aminoacyl-tRNA synthetase family. As to quaternary structure, monomer.

It localises to the cytoplasm. It carries out the reaction tRNA(Arg) + L-arginine + ATP = L-arginyl-tRNA(Arg) + AMP + diphosphate. The chain is Arginine--tRNA ligase from Syntrophotalea carbinolica (strain DSM 2380 / NBRC 103641 / GraBd1) (Pelobacter carbinolicus).